A 299-amino-acid polypeptide reads, in one-letter code: Peroxisomal biogenesis factor 19 (299 aa).

Positions 1–63 are disordered; the sequence is MAAAEEGCSV…SPGDTAKDAL (63 aa). Ala-2 carries the N-acetylalanine modification. Residues 2–56 are docking to the peroxisome membrane and binding to PEX3; it reads AAAEEGCSVGAEADRELEELLESALDDFDKAKPSPAPPSTTTAPDASGPQKRSPG. The tract at residues 2–91 is necessary for PEX19 function on peroxisome biogenesis; it reads AAAEEGCSVG…QATAEFEKAM (90 aa). Acidic residues predominate over residues 16-27; the sequence is RELEELLESALD. 3 positions are modified to phosphoserine: Ser-35, Ser-54, and Ser-66. A Phosphothreonine modification is found at Thr-236. Cys-296 carries the cysteine methyl ester modification. A lipid anchor (S-farnesyl cysteine) is attached at Cys-296. The propeptide at 297–299 is removed in mature form; it reads LIM.

The protein belongs to the peroxin-19 family. Interacts with a broad range of peroxisomal membrane proteins, including PEX3, PEX10, PEX11A, PEX11B, PEX12, PEX13, PEX14 and PEX16, PXMP2/PMP22, PXMP4/PMP24, SLC25A17/PMP34, ABCD1/ALDP, ABCD2/ALDRP, and ABCD3/PMP70. Also interacts with the tumor suppressor CDKN2A/p19ARF. As to quaternary structure, (Microbial infection) Interacts with human cytomegalovirus protein UL37 isoform vMIA; this interaction inhibits the peroxisomal-dependent antiviral signaling. As to expression, ubiquitously expressed. Isoform 1 is strongly predominant in all tissues except in utero where isoform 2 is the main form.

The protein resides in the cytoplasm. It localises to the peroxisome membrane. Necessary for early peroxisomal biogenesis. Acts both as a cytosolic chaperone and as an import receptor for peroxisomal membrane proteins (PMPs). Binds and stabilizes newly synthesized PMPs in the cytoplasm by interacting with their hydrophobic membrane-spanning domains, and targets them to the peroxisome membrane by binding to the integral membrane protein PEX3. Excludes CDKN2A from the nucleus and prevents its interaction with MDM2, which results in active degradation of TP53. In Homo sapiens (Human), this protein is Peroxisomal biogenesis factor 19.